The sequence spans 254 residues: Mannose-binding protein (254 aa).

The signal sequence occupies residues 1–19 (MTLLQPFSALLLCLSLMMA). Residues 46–99 (NGLPGRDGRDGPKGEKGDPGEGLRGLQGLPGKAGPQGLKGEVGPQGEKGQKGER) form a disordered region. A compositionally biased stretch (basic and acidic residues) spans 51–66 (RDGRDGPKGEKGDPGE). The residue at position 57 (Pro-57) is a 4-hydroxyproline. Residues Lys-58 and Lys-61 each carry the 5-hydroxylysine modification. Residues Lys-58 and Lys-61 are each glycosylated (O-linked (Gal...) hydroxylysine). Position 75 is a 4-hydroxyproline (Pro-75). 2 positions are modified to 5-hydroxylysine: Lys-93 and Lys-96. Positions 140 to 250 (VGKKMFVSTG…LDCSNSNIFI (111 aa)) constitute a C-type lectin domain. Disulfide bonds link Cys-161–Cys-252 and Cys-229–Cys-243.

Oligomeric complex of 3 or more homotrimers.

It is found in the secreted. Functionally, calcium-dependent lectin involved in innate immune defense. Binds mannose, fucose and N-acetylglucosamine on different microorganisms and activates the lectin complement pathway. The chain is Mannose-binding protein from Gallus gallus (Chicken).